The following is a 550-amino-acid chain: Dihydroxy-acid dehydratase (550 aa).

D78 lines the Mg(2+) pocket. C119 lines the [2Fe-2S] cluster pocket. Mg(2+)-binding residues include D120 and K121. Residue K121 is modified to N6-carboxylysine. Residue C191 coordinates [2Fe-2S] cluster. Mg(2+) is bound at residue E440. S466 functions as the Proton acceptor in the catalytic mechanism.

It belongs to the IlvD/Edd family. As to quaternary structure, homodimer. It depends on [2Fe-2S] cluster as a cofactor. Requires Mg(2+) as cofactor.

The catalysed reaction is (2R)-2,3-dihydroxy-3-methylbutanoate = 3-methyl-2-oxobutanoate + H2O. The enzyme catalyses (2R,3R)-2,3-dihydroxy-3-methylpentanoate = (S)-3-methyl-2-oxopentanoate + H2O. Its pathway is amino-acid biosynthesis; L-isoleucine biosynthesis; L-isoleucine from 2-oxobutanoate: step 3/4. It participates in amino-acid biosynthesis; L-valine biosynthesis; L-valine from pyruvate: step 3/4. Functions in the biosynthesis of branched-chain amino acids. Catalyzes the dehydration of (2R,3R)-2,3-dihydroxy-3-methylpentanoate (2,3-dihydroxy-3-methylvalerate) into 2-oxo-3-methylpentanoate (2-oxo-3-methylvalerate) and of (2R)-2,3-dihydroxy-3-methylbutanoate (2,3-dihydroxyisovalerate) into 2-oxo-3-methylbutanoate (2-oxoisovalerate), the penultimate precursor to L-isoleucine and L-valine, respectively. The protein is Dihydroxy-acid dehydratase of Methanococcus maripaludis (strain DSM 14266 / JCM 13030 / NBRC 101832 / S2 / LL).